A 120-amino-acid polypeptide reads, in one-letter code: NAD(P)H-quinone oxidoreductase subunit 3 (120 aa).

The next 3 membrane-spanning stretches (helical) occupy residues 10-30, 64-84, and 89-109; these read FLGFLLIAAAVPVLALVTNLI, MFALVFVIFDVETVFLYPWAV, and LGLLAFIEALIFIAILVIALA.

It belongs to the complex I subunit 3 family. NDH-1 can be composed of about 15 different subunits; different subcomplexes with different compositions have been identified which probably have different functions.

The protein localises to the cellular thylakoid membrane. The catalysed reaction is a plastoquinone + NADH + (n+1) H(+)(in) = a plastoquinol + NAD(+) + n H(+)(out). The enzyme catalyses a plastoquinone + NADPH + (n+1) H(+)(in) = a plastoquinol + NADP(+) + n H(+)(out). In terms of biological role, NDH-1 shuttles electrons from an unknown electron donor, via FMN and iron-sulfur (Fe-S) centers, to quinones in the respiratory and/or the photosynthetic chain. The immediate electron acceptor for the enzyme in this species is believed to be plastoquinone. Couples the redox reaction to proton translocation, and thus conserves the redox energy in a proton gradient. Cyanobacterial NDH-1 also plays a role in inorganic carbon-concentration. This is NAD(P)H-quinone oxidoreductase subunit 3 from Prochlorococcus marinus (strain AS9601).